The following is a 113-amino-acid chain: UPF0102 protein CHU_0465 (113 aa).

It belongs to the UPF0102 family.

The protein is UPF0102 protein CHU_0465 of Cytophaga hutchinsonii (strain ATCC 33406 / DSM 1761 / CIP 103989 / NBRC 15051 / NCIMB 9469 / D465).